The primary structure comprises 278 residues: E3 ubiquitin-protein ligase CHIP (278 aa).

3 TPR repeats span residues 10–43, 45–77, and 78–111; these read AERL…SPNV, AYWT…VHNS, and VKAH…GRCS. Positions 143–194 form a coiled coil; sequence ELNSLKETCEAALNQQRALDMSRTEESSDEAYTAHTERLKALERVFKKAAEE. Positions 199–273 constitute a U-box domain; it reads EVPDYLCCNI…AAYLEKHVWA (75 aa).

As to quaternary structure, interacts with HSC70-4, PP2AA1, PP2AA3 and PP2A5, as well as with UBC8, UBC9 and UBC10. Also interacts with the chloroplastic proteolytic subunits ClpP4, FtsH1 and FtsH2.

It catalyses the reaction S-ubiquitinyl-[E2 ubiquitin-conjugating enzyme]-L-cysteine + [acceptor protein]-L-lysine = [E2 ubiquitin-conjugating enzyme]-L-cysteine + N(6)-ubiquitinyl-[acceptor protein]-L-lysine.. Its pathway is protein modification; protein ubiquitination. In terms of biological role, has E3 ubiquitin-protein ligase activity and may target misfolded substrates towards proteasomal degradation. Regulates the activity of some serine/threonine-protein phosphatases by E3 ubiquitin-protein ligase activity. Required for responses to biotic and abiotic stresses such as auxin, abscisic acid (ABA), low and high temperature and darkness, probably through the activation of serine/threonine-protein phosphatase and the subsequent modification of the plasma membrane composition. Regulates the chloroplastic Clp proteolytic activity in response to stresses. Ubiquitylates FtsH1, a component of the chloroplast FtsH protease, and affects protein degradation in chloroplasts. Mediates plastid precursor degradation to prevent cytosolic precursor accumulation, together with the molecular chaperone HSC70-4. Mediates ubiquitination of transit peptides and thereby led to their degradation through the ubiquitin-proteasome system. This chain is E3 ubiquitin-protein ligase CHIP, found in Arabidopsis thaliana (Mouse-ear cress).